An 809-amino-acid chain; its full sequence is TPR repeat-containing protein TP_0920 (809 aa).

Positions 103-125 are disordered; sequence PGEARALPNSEQPEVPASLDSTS. 9 TPR repeats span residues 315–348, 383–416, 418–450, 471–504, 513–550, 552–582, 583–616, 656–689, and 723–756; these read LREY…DPHC, AFLS…DPHQ, LFAL…FLAQ, TEVR…GSAD, LLLR…APDC, LYHF…DPDN, GWLH…LPHE, GQAF…EPQN, and AHVY…WPQC.

This is TPR repeat-containing protein TP_0920 from Treponema pallidum (strain Nichols).